Consider the following 201-residue polypeptide: UPF0301 protein RHE_CH00966 (201 aa).

Belongs to the UPF0301 (AlgH) family.

The sequence is that of UPF0301 protein RHE_CH00966 from Rhizobium etli (strain ATCC 51251 / DSM 11541 / JCM 21823 / NBRC 15573 / CFN 42).